A 1218-amino-acid polypeptide reads, in one-letter code: Cytosolic carboxypeptidase 1 (1218 aa).

Disordered stretches follow at residues 476–512 (VVMK…RVAP) and 590–617 (TEDD…PTLH). Residues 477–499 (VMKERASPKGEEAKEDPKGHDRT) show a composition bias toward basic and acidic residues. The region spanning 840–1130 (YPYTYSTLQM…KFCVGLLRLK (291 aa)) is the Peptidase M14 domain. Positions 912, 915, and 1009 each coordinate Zn(2+). Residue E1094 is the Proton donor/acceptor of the active site. At S1160 the chain carries Phosphoserine. The disordered stretch occupies residues 1193–1218 (ENTGDYEPSAQEEALSDSEVSRTHLI).

The protein belongs to the peptidase M14 family. As to quaternary structure, interacts with MYLK. Zn(2+) serves as cofactor. As to expression, widely expressed. Highly expressed in the cerebellum and cortex of adult mouse brain. Expressed at similar levels in both the cerebellum and the cortex throughout all developmental stages. Also expressed in sciatic nerve transection, spinal motor neurons undergoing axon regeneration, testis, heart, eye, lung, pancreas, intestine, stomach, pituitary, spleen, adrenal, kidney and in developing brain. Expression in cranial motor nuclei is the same as that observed in uninjured primary motor neurons. Expression is prevalent in sensory neurons and hippocampal CA3 neurons in addition to regenerating motor neurons.

It localises to the cytoplasm. The protein resides in the cytosol. Its subcellular location is the nucleus. The protein localises to the mitochondrion. It catalyses the reaction (L-glutamyl)(n+1)-gamma-L-glutamyl-L-glutamyl-[protein] + H2O = (L-glutamyl)(n)-gamma-L-glutamyl-L-glutamyl-[protein] + L-glutamate. The enzyme catalyses C-terminal L-alpha-aminoacyl-L-glutamyl-L-glutamyl-[tubulin] + H2O = C-terminal L-alpha-aminoacyl-L-glutamyl-[tubulin] + L-glutamate. Its function is as follows. Metallocarboxypeptidase that mediates protein deglutamylation of tubulin and non-tubulin target proteins. Catalyzes the removal of polyglutamate side chains present on the gamma-carboxyl group of glutamate residues within the C-terminal tail of alpha- and beta-tubulin. Specifically cleaves tubulin long-side-chains, while it is not able to remove the branching point glutamate. Also catalyzes the removal of polyglutamate residues from the carboxy-terminus of alpha-tubulin as well as non-tubulin proteins such as MYLK. Involved in KLF4 deglutamylation which promotes KLF4 proteasome-mediated degradation, thereby negatively regulating cell pluripotency maintenance and embryogenesis. This chain is Cytosolic carboxypeptidase 1, found in Mus musculus (Mouse).